Reading from the N-terminus, the 467-residue chain is 3-isopropylmalate dehydratase large subunit (467 aa).

[4Fe-4S] cluster contacts are provided by Cys-348, Cys-409, and Cys-412. Residues 423–448 (NERSISTSNRNFEGRQGKGSRTHLAS) form a disordered region.

The protein belongs to the aconitase/IPM isomerase family. LeuC type 1 subfamily. Heterodimer of LeuC and LeuD. The cofactor is [4Fe-4S] cluster.

It catalyses the reaction (2R,3S)-3-isopropylmalate = (2S)-2-isopropylmalate. It functions in the pathway amino-acid biosynthesis; L-leucine biosynthesis; L-leucine from 3-methyl-2-oxobutanoate: step 2/4. Catalyzes the isomerization between 2-isopropylmalate and 3-isopropylmalate, via the formation of 2-isopropylmaleate. This chain is 3-isopropylmalate dehydratase large subunit, found in Bifidobacterium longum (strain DJO10A).